The sequence spans 552 residues: Probable glucomannan 4-beta-mannosyltransferase 10 (552 aa).

The chain crosses the membrane as a helical span at residues 62–82 (IVPLFKCLVAFCLIISLLVFI). D161 is a catalytic residue. Substrate-binding residues include D220 and D222. D314 is an active-site residue. Transmembrane regions (helical) follow at residues 393 to 413 (IIVHCFTFIFYCVILPTSVFF), 430 to 450 (ITLCIVIATPRSFYLVIFWIL), 509 to 529 (EIMVGIYILCCACYGLFFGNT), and 530 to 550 (LLYLYLFMQAVAFLISGVGFV).

It belongs to the glycosyltransferase 2 family. Plant cellulose synthase-like A subfamily.

The protein localises to the golgi apparatus membrane. The enzyme catalyses GDP-mannose + (glucomannan)n = GDP + (glucomannan)n+1.. In terms of biological role, probable mannan synthase which consists of a 4-beta-mannosyltransferase activity on mannan using GDP-mannose. The beta-1,4-mannan product is the backbone for galactomannan synthesis by galactomannan galactosyltransferase. Galactomannan is a noncellulosic polysaccharides of plant cell wall. This chain is Probable glucomannan 4-beta-mannosyltransferase 10, found in Arabidopsis thaliana (Mouse-ear cress).